A 212-amino-acid polypeptide reads, in one-letter code: Probable dual specificity protein phosphatase DDB_G0269404 (212 aa).

A Tyrosine-protein phosphatase domain is found at 30 to 169; the sequence is FDAQEVIPNL…LINYEATILK (140 aa). Residue Cys113 is the Phosphocysteine intermediate of the active site.

This sequence belongs to the protein-tyrosine phosphatase family. Non-receptor class dual specificity subfamily.

The catalysed reaction is O-phospho-L-tyrosyl-[protein] + H2O = L-tyrosyl-[protein] + phosphate. It carries out the reaction O-phospho-L-seryl-[protein] + H2O = L-seryl-[protein] + phosphate. It catalyses the reaction O-phospho-L-threonyl-[protein] + H2O = L-threonyl-[protein] + phosphate. Has a dual specificity toward Ser/Thr and Tyr-containing proteins. This is Probable dual specificity protein phosphatase DDB_G0269404 from Dictyostelium discoideum (Social amoeba).